Reading from the N-terminus, the 351-residue chain is Dihydroorotate dehydrogenase (quinone) (351 aa).

FMN contacts are provided by residues 67 to 71 (AGFDK) and threonine 91. Lysine 71 serves as a coordination point for substrate. 116–120 (NAMGF) serves as a coordination point for substrate. FMN is bound by residues asparagine 145 and asparagine 178. Asparagine 178 serves as a coordination point for substrate. The active-site Nucleophile is the serine 181. Substrate is bound at residue asparagine 183. Lysine 214 and threonine 242 together coordinate FMN. Position 243 to 244 (243 to 244 (NT)) interacts with substrate. Residues glycine 262, glycine 291, and 312-313 (YS) each bind FMN.

Belongs to the dihydroorotate dehydrogenase family. Type 2 subfamily. Monomer. FMN serves as cofactor.

The protein localises to the cell membrane. It carries out the reaction (S)-dihydroorotate + a quinone = orotate + a quinol. Its pathway is pyrimidine metabolism; UMP biosynthesis via de novo pathway; orotate from (S)-dihydroorotate (quinone route): step 1/1. Its function is as follows. Catalyzes the conversion of dihydroorotate to orotate with quinone as electron acceptor. The chain is Dihydroorotate dehydrogenase (quinone) from Helicobacter pylori (strain HPAG1).